The primary structure comprises 196 residues: Heat shock protein beta-8 (196 aa).

Phosphoserine is present on residues Ser24 and Ser57. Thr63 bears the Phosphothreonine; by PKC; in vitro mark. Residues Arg71 and Arg78 each carry the asymmetric dimethylarginine modification. The region spanning 74 to 185 (TATARFGVPA…TFGESSFNNE (112 aa)) is the sHSP domain. The disordered stretch occupies residues 176 to 196 (TFGESSFNNELPQDSQEVTCT). Residues 177–196 (FGESSFNNELPQDSQEVTCT) are compositionally biased toward polar residues.

It belongs to the small heat shock protein (HSP20) family. In terms of assembly, monomer. Forms a ternary complex with BAG3 and HSPA1A. Component of the chaperone-assisted selective autophagy (CASA) complex consisting of BAG3, HSPA8/HSC70, HSPB8 and STUB1/CHIP. Interacts with HSPB1. Interacts with DNAJB6. Interacts with BAG3. In terms of tissue distribution, predominantly expressed in skeletal muscle and heart.

It is found in the cytoplasm. It localises to the nucleus. Its function is as follows. Involved in the chaperone-assisted selective autophagy (CASA), a crucial process for protein quality control, particularly in mechanical strained cells and tissues such as muscle. Displays temperature-dependent chaperone activity. In Homo sapiens (Human), this protein is Heat shock protein beta-8 (HSPB8).